A 321-amino-acid polypeptide reads, in one-letter code: uncharacterized protein (321 aa).

The signal sequence occupies residues 1-18 (MKKMKKLLLLLSASFAFS).

This is an uncharacterized protein from Aquifex aeolicus (strain VF5).